Here is a 34-residue protein sequence, read N- to C-terminus: NU-buthitoxin-Ptr1a (34 aa).

3 cysteine pairs are disulfide-bonded: C6-C27, C12-C32, and C16-C34.

In terms of tissue distribution, expressed by the venom gland.

It localises to the secreted. Its function is as follows. Toxin that acts as an agonist on melanocortin receptors (MC1R, MC3R, MC5R, MC5R). After binding to MC1R, the peptide activates the hMC1R/Gs pathway, but after binding to MC4R, it is not able to activate or antagonize the MC4R/Gs pathway. Inhibits melanocyte stimulating hormone (MSH)-binding to human receptors (Ki=2.9 uM to MC1R, Ki=3.9 uM to MC3R, Ki=2.6 uM to MC4R, Ki=2.2 uM to MC5R). This toxin is structurally unrelated to the natural agonists. In Parabuthus transvaalicus (Transvaal thick-tailed scorpion), this protein is NU-buthitoxin-Ptr1a.